Reading from the N-terminus, the 119-residue chain is Large ribosomal subunit protein bL20 (119 aa).

The protein belongs to the bacterial ribosomal protein bL20 family.

Its function is as follows. Binds directly to 23S ribosomal RNA and is necessary for the in vitro assembly process of the 50S ribosomal subunit. It is not involved in the protein synthesizing functions of that subunit. This Streptococcus gordonii (strain Challis / ATCC 35105 / BCRC 15272 / CH1 / DL1 / V288) protein is Large ribosomal subunit protein bL20.